Reading from the N-terminus, the 374-residue chain is MAHSTPCSQTSLAVPNHFSLVSHVTVPSEGVMPSPLSLCRYLPRELSPSVDSRSCSIPLVAPRKAGKLFLGTTPPRAPGLPRRLAWFSIDWEQVCLMHRLGSGGFGSVYKATYHGVPVAIKQVNKCTEDLRASQRSFWAELNIAGLRHDNIVRVVAASTRTPEDSNSLGTIIMEFGGNVTLHQVIYDATRSPEPLSCRKQLSLGKCLKYSLDVVNGLLFLHSQSILHLDLKPANILISEQDVCKISDFGCSQKLQDLRGRQASPPHIGGTYTHQAPEILKGEIATPKADIYSFGITLWQMTTREVPYSGEPQYVQYAVVAYNLRPSLAGAVFTASLTGKALQNIIQSCWEARGLQRPSAELLQRDLKAFRGTLG.

The Protein kinase domain occupies 94-370; it reads VCLMHRLGSG…LLQRDLKAFR (277 aa). Residues 100 to 108 and K121 contribute to the ATP site; that span reads LGSGGFGSV. D229 acts as the Proton acceptor in catalysis.

It belongs to the protein kinase superfamily. Ser/Thr protein kinase family.

The enzyme catalyses L-seryl-[protein] + ATP = O-phospho-L-seryl-[protein] + ADP + H(+). It carries out the reaction L-threonyl-[protein] + ATP = O-phospho-L-threonyl-[protein] + ADP + H(+). The protein is Serine/threonine-protein kinase-transforming protein mos (V-MOS) of Mus musculus (Mouse).